The sequence spans 186 residues: Peptidyl-tRNA hydrolase (186 aa).

Tyr-14 is a tRNA binding site. His-19 acts as the Proton acceptor in catalysis. Tyr-64, Asn-66, and Asn-112 together coordinate tRNA.

Belongs to the PTH family. As to quaternary structure, monomer.

It localises to the cytoplasm. The enzyme catalyses an N-acyl-L-alpha-aminoacyl-tRNA + H2O = an N-acyl-L-amino acid + a tRNA + H(+). In terms of biological role, hydrolyzes ribosome-free peptidyl-tRNAs (with 1 or more amino acids incorporated), which drop off the ribosome during protein synthesis, or as a result of ribosome stalling. Its function is as follows. Catalyzes the release of premature peptidyl moieties from peptidyl-tRNA molecules trapped in stalled 50S ribosomal subunits, and thus maintains levels of free tRNAs and 50S ribosomes. In Bacillus cereus (strain Q1), this protein is Peptidyl-tRNA hydrolase.